A 251-amino-acid chain; its full sequence is Type III pantothenate kinase (251 aa).

6 to 13 (DCGNSFIK) serves as a coordination point for ATP. Residues Y93 and 100 to 103 (GLDR) each bind substrate. The active-site Proton acceptor is D102. D122 provides a ligand contact to K(+). ATP is bound at residue T125. Residue T182 participates in substrate binding.

The protein belongs to the type III pantothenate kinase family. In terms of assembly, homodimer. Requires NH4(+) as cofactor. K(+) serves as cofactor.

Its subcellular location is the cytoplasm. It catalyses the reaction (R)-pantothenate + ATP = (R)-4'-phosphopantothenate + ADP + H(+). It participates in cofactor biosynthesis; coenzyme A biosynthesis; CoA from (R)-pantothenate: step 1/5. In terms of biological role, catalyzes the phosphorylation of pantothenate (Pan), the first step in CoA biosynthesis. This chain is Type III pantothenate kinase, found in Azotobacter vinelandii (strain DJ / ATCC BAA-1303).